Reading from the N-terminus, the 479-residue chain is MKWETVIGLEIHAQLATRTKIFSGAPTAYGAEPNTQACPVDLGLPGVLPVLNREVVRMAIKFGLAVDARIAPRSVFARKNYFYPDLPKGYQISQYDLPIVEGGHLDIELEDGASKRIGITRAHLEEDAGKSLHEDFHGMTGVDLNRAGTPLMEIVSEPDLRSPAEAAAYMKKLHALVRYLEICDGNMQEGSFRCDANVSVRPVGQEAFGTRAELKNLNSFRFVERALEYEVERQIDLLESGGEVVQETRLYDVDKGVTRSMRTKEEANDYRYFPEPDLLPVEVDAALVDEVRETLPELPDEKRRRFEEEYGLPAYDAGVLTATRDMADFFEHAVSESGGFAKRTANLLMSELLAYLNKDGLEIAESPVTPEMLGKLVARVEDETLSSRGAKDVFEAMWAGEGEPDEVIEKKGLKQVTDTSAIEALVDEAIANNPQQLEQYRAGKEKLFGFFVGQVMKASGGKANPQQVNELLKKKLDGS.

This sequence belongs to the GatB/GatE family. GatB subfamily. As to quaternary structure, heterotrimer of A, B and C subunits.

The enzyme catalyses L-glutamyl-tRNA(Gln) + L-glutamine + ATP + H2O = L-glutaminyl-tRNA(Gln) + L-glutamate + ADP + phosphate + H(+). It catalyses the reaction L-aspartyl-tRNA(Asn) + L-glutamine + ATP + H2O = L-asparaginyl-tRNA(Asn) + L-glutamate + ADP + phosphate + 2 H(+). Functionally, allows the formation of correctly charged Asn-tRNA(Asn) or Gln-tRNA(Gln) through the transamidation of misacylated Asp-tRNA(Asn) or Glu-tRNA(Gln) in organisms which lack either or both of asparaginyl-tRNA or glutaminyl-tRNA synthetases. The reaction takes place in the presence of glutamine and ATP through an activated phospho-Asp-tRNA(Asn) or phospho-Glu-tRNA(Gln). The protein is Aspartyl/glutamyl-tRNA(Asn/Gln) amidotransferase subunit B of Halorhodospira halophila (strain DSM 244 / SL1) (Ectothiorhodospira halophila (strain DSM 244 / SL1)).